We begin with the raw amino-acid sequence, 105 residues long: MNKIRKGDEVVVLAGKDRGRRGAVLRRVDDERVVVEGVNRVKKHVRPNPLKGEVGGIVEKEMPIHVSNVALFNPAAQKADRVGIKVLEDGRKVRFFKSNGELVDA.

Belongs to the universal ribosomal protein uL24 family. As to quaternary structure, part of the 50S ribosomal subunit.

Its function is as follows. One of two assembly initiator proteins, it binds directly to the 5'-end of the 23S rRNA, where it nucleates assembly of the 50S subunit. In terms of biological role, one of the proteins that surrounds the polypeptide exit tunnel on the outside of the subunit. This is Large ribosomal subunit protein uL24 from Azoarcus sp. (strain BH72).